The sequence spans 250 residues: L-cystine transport system ATP-binding protein TcyN (250 aa).

Residues 4 to 244 (IEVKNLVKKF…PEQPRTRQFL (241 aa)) enclose the ABC transporter domain. An ATP-binding site is contributed by 36 to 43 (GPSGSGKT).

The protein belongs to the ABC transporter superfamily. As to quaternary structure, the complex is composed of two ATP-binding proteins (TcyN), two transmembrane proteins (TcyL) and a solute-binding protein (TcyJ).

It is found in the cell inner membrane. The enzyme catalyses L-cystine(out) + ATP + H2O = L-cystine(in) + ADP + phosphate + H(+). The catalysed reaction is D-cystine(out) + ATP + H2O = D-cystine(in) + ADP + phosphate + H(+). Its activity is regulated as follows. The TcyJLN system is inhibited by L-cystine, L-cysteine, DL-2,6-diaminopimelic acid and L-cystathionine, and is stimulated by D-cysteine. Part of the ABC transporter complex TcyJLN involved in L-cystine import. This high affinity cystine transporter is involved in resistance to oxidative stress by forming a L-cysteine/L-cystine shuttle system with the EamA transporter, which exports L-cysteine as reducing equivalents to the periplasm to prevent the cells from oxidative stress. Exported L-cysteine can reduce the periplasmic hydrogen peroxide to water, and then generated L-cystine is imported back into the cytoplasm via the TcyJLN complex. Functions at low cystine concentrations. The system can also transport L-cysteine, diaminopimelic acid (DAP), djenkolate, lanthionine, D-cystine, homocystine, and it mediates accumulation of the toxic compounds L-selenaproline (SCA) and L-selenocystine (SeCys). Could also facilitate threonine efflux. Responsible for energy coupling to the transport system. The protein is L-cystine transport system ATP-binding protein TcyN of Escherichia coli (strain K12).